The primary structure comprises 1622 residues: Transient receptor potential cation channel subfamily M member 1 (1622 aa).

Disordered stretches follow at residues 1–25, 64–95, 450–490, 618–641, and 822–856; these read MGSM…GSQK, PPLP…KHTQ, LAPP…EVEE, LGME…EEEI, and SKEN…HKKQ. Residues 1–875 are Cytoplasmic-facing; sequence MGSMRKMSSS…CEFYNAPIVK (875 aa). Low complexity predominate over residues 8–25; that stretch reads SSSFKRGSIKSSTSGSQK. Polar residues predominate over residues 70–95; it reads APSTTGEDTKQADTQSGKWSVSKHTQ. A compositionally biased stretch (basic residues) spans 472–483; the sequence is GRGKGKGKKKGK. Basic and acidic residues-rich tracts occupy residues 823–832 and 843–853; these read KENEDGKEKE and GSRKGDEENEH. Residues 876 to 896 traverse the membrane as a helical segment; sequence FWFYTISYLGYLLLFNYVILV. Residues 897–942 are Extracellular-facing; the sequence is RMDGWPSPQEWIVISYIVSLALEKIREILMSEPGKLSQKIKVWLQE. The helical transmembrane segment at 943–963 threads the bilayer; sequence YWNITDLVAISMFMVGAILRL. Over 964–973 the chain is Cytoplasmic; it reads QSQPYMGYGR. Residues 974 to 994 form a helical membrane-spanning segment; it reads VIYCVDIILWYIRVLDIFGVN. The Extracellular segment spans residues 995–1006; that stretch reads KYLGPYVMMIGK. The helical transmembrane segment at 1007 to 1027 threads the bilayer; sequence MMIDMLYFVVIMLVVLMSFGV. The Cytoplasmic segment spans residues 1028–1099; that stretch reads ARQAILHPEE…CIPGAWLTPA (72 aa). Residues 1100-1120 form a helical membrane-spanning segment; sequence LMACYLLVANILLVNLLIAVF. Asn-1121 carries an N-linked (GlcNAc...) asparagine glycan. Topologically, residues 1121–1150 are extracellular; it reads NNTFFEVKSISNQVWKFQRYQLIMTFHDRP. The helical transmembrane segment at 1151 to 1171 threads the bilayer; the sequence is VLPPPMIILSHIYIIIMRLSG. Over 1172 to 1622 the chain is Cytoplasmic; that stretch reads RCRKKREGDQ…QEKRSAETEC (451 aa). A coiled-coil region spans residues 1224-1252; sequence DERIRVTSERVENMSMRLEEINERENFMK. 3 disordered regions span residues 1354 to 1383, 1389 to 1408, and 1567 to 1622; these read EDAK…RSRL, LSTE…EFDP, and CLRS…ETEC. Positions 1613-1622 are enriched in basic and acidic residues; it reads QEKRSAETEC.

The protein belongs to the transient receptor (TC 1.A.4) family. LTrpC subfamily. TRPM1 sub-subfamily. As to quaternary structure, homodimer. Interacts with TRPM3; the interaction results in the formation of a heteromultimeric cation channel complex that are functionally different from the homomeric channels. Interacts with GPR179. Associates with both guanine nucleotide-binding proteins G(o) and beta-gamma G protein dimer; implicated in directly regulating TRPM1 channel open-state. In terms of tissue distribution, expressed in the retina where it localizes on dendritic tips of ON bipolar cells. Specifically, it is expressed in retinal bipolar cells (BPCs) of the ON subtype. Not detected in brain, lung, liver, heart, kidney, spleen or small intestine. Also expressed at high levels in poorly metastatic variants of B16 melanoma and at much reduced levels in highly metastatic variants of B16 melanoma.

The protein localises to the cell membrane. It localises to the endoplasmic reticulum membrane. The protein resides in the cell projection. It is found in the axon. The catalysed reaction is Ca(2+)(in) = Ca(2+)(out). It carries out the reaction Mg(2+)(in) = Mg(2+)(out). The enzyme catalyses Mn(2+)(in) = Mn(2+)(out). It catalyses the reaction Ni(2+)(in) = Ni(2+)(out). Inhibited by extracellular zinc ions. Inhibited by intracellular Mg(2+). Activated by the neuroactive steroid pregnenolone sulfate. Negatively regulated by activation of GRM6 receptors in the ON-bipolar cells. Functionally, constitutively open nonselective divalent cation-conducting channels which mediate the influx of Ca(2+), Mg(2+), Mn(2+), Ba(2+), and Ni(2+) into the cytoplasm, leading to membrane depolarization. Impermeable to zinc ions. In addition, forms heteromultimeric ion channels with TRPM3 which are permeable for calcium and zinc ions. Plays an essential role for the depolarizing photoresponse of retinal ON bipolar cells. In the dark, tonic release of glutamate activates the G-protein coupled receptor for glutamate (GRM6), its activation induces the release of G(o) and the beta-gamma G protein dimer. Both subunits can interact and inactivate the TRPM1 channel. A light onset, induces decrease in glutamate release and deactivation of GRM6 leading to channel opening and membrane depolarization. May play a role in metastasis suppression. The chain is Transient receptor potential cation channel subfamily M member 1 from Mus musculus (Mouse).